The sequence spans 342 residues: UDP-N-acetylglucosamine--N-acetylmuramyl-(pentapeptide) pyrophosphoryl-undecaprenol N-acetylglucosamine transferase (342 aa).

Residues 10 to 12 (TGG), N124, S177, and Q275 contribute to the UDP-N-acetyl-alpha-D-glucosamine site.

The protein belongs to the glycosyltransferase 28 family. MurG subfamily.

The protein resides in the cell inner membrane. It carries out the reaction di-trans,octa-cis-undecaprenyl diphospho-N-acetyl-alpha-D-muramoyl-L-alanyl-D-glutamyl-meso-2,6-diaminopimeloyl-D-alanyl-D-alanine + UDP-N-acetyl-alpha-D-glucosamine = di-trans,octa-cis-undecaprenyl diphospho-[N-acetyl-alpha-D-glucosaminyl-(1-&gt;4)]-N-acetyl-alpha-D-muramoyl-L-alanyl-D-glutamyl-meso-2,6-diaminopimeloyl-D-alanyl-D-alanine + UDP + H(+). It functions in the pathway cell wall biogenesis; peptidoglycan biosynthesis. In terms of biological role, cell wall formation. Catalyzes the transfer of a GlcNAc subunit on undecaprenyl-pyrophosphoryl-MurNAc-pentapeptide (lipid intermediate I) to form undecaprenyl-pyrophosphoryl-MurNAc-(pentapeptide)GlcNAc (lipid intermediate II). This chain is UDP-N-acetylglucosamine--N-acetylmuramyl-(pentapeptide) pyrophosphoryl-undecaprenol N-acetylglucosamine transferase, found in Campylobacter jejuni subsp. doylei (strain ATCC BAA-1458 / RM4099 / 269.97).